The sequence spans 1343 residues: DNA-directed RNA polymerase subunit beta (1343 aa).

The protein belongs to the RNA polymerase beta chain family. In terms of assembly, the RNAP catalytic core consists of 2 alpha, 1 beta, 1 beta' and 1 omega subunit. When a sigma factor is associated with the core the holoenzyme is formed, which can initiate transcription.

The catalysed reaction is RNA(n) + a ribonucleoside 5'-triphosphate = RNA(n+1) + diphosphate. Functionally, DNA-dependent RNA polymerase catalyzes the transcription of DNA into RNA using the four ribonucleoside triphosphates as substrates. In Shewanella piezotolerans (strain WP3 / JCM 13877), this protein is DNA-directed RNA polymerase subunit beta.